The following is a 651-amino-acid chain: Kinesin-like protein KIF22-A (651 aa).

One can recognise a Kinesin motor domain in the interval R31 to I359. Residue G116–T123 participates in ATP binding. Positions Q366–G413 are disordered. The span at T401–D410 shows a compositional bias: polar residues. Residues K452–L498 adopt a coiled-coil conformation. Residues G561–N564 carry the Important for regulated proteolytic degradation motif.

It belongs to the TRAFAC class myosin-kinesin ATPase superfamily. Kinesin family. Ubiquitinated, leading to its subsequent proteasomal degradation.

Its subcellular location is the nucleus. The protein resides in the cytoplasm. It localises to the cytoskeleton. In terms of biological role, kinesin family member that is involved in spindle formation and the movements of chromosomes during mitosis and meiosis. Binds to microtubules and to DNA. This chain is Kinesin-like protein KIF22-A (kif22-a), found in Xenopus laevis (African clawed frog).